Consider the following 87-residue polypeptide: Small ribosomal subunit protein bS20 (87 aa).

The tract at residues 1 to 26 (MANIKSAKKRAIQAEKARKHNASRRS) is disordered.

This sequence belongs to the bacterial ribosomal protein bS20 family.

Binds directly to 16S ribosomal RNA. The polypeptide is Small ribosomal subunit protein bS20 (Tolumonas auensis (strain DSM 9187 / NBRC 110442 / TA 4)).